Reading from the N-terminus, the 264-residue chain is Thymidylate synthase (264 aa).

A dUMP-binding site is contributed by Arg-21. His-51 provides a ligand contact to (6R)-5,10-methylene-5,6,7,8-tetrahydrofolate. 126–127 serves as a coordination point for dUMP; the sequence is RR. Cys-146 acts as the Nucleophile in catalysis. Residues 166-169, Asn-177, and 207-209 contribute to the dUMP site; these read RSCD and HLY. Asp-169 lines the (6R)-5,10-methylene-5,6,7,8-tetrahydrofolate pocket. (6R)-5,10-methylene-5,6,7,8-tetrahydrofolate is bound at residue Ala-263.

The protein belongs to the thymidylate synthase family. Bacterial-type ThyA subfamily. Homodimer.

Its subcellular location is the cytoplasm. The catalysed reaction is dUMP + (6R)-5,10-methylene-5,6,7,8-tetrahydrofolate = 7,8-dihydrofolate + dTMP. It participates in pyrimidine metabolism; dTTP biosynthesis. Functionally, catalyzes the reductive methylation of 2'-deoxyuridine-5'-monophosphate (dUMP) to 2'-deoxythymidine-5'-monophosphate (dTMP) while utilizing 5,10-methylenetetrahydrofolate (mTHF) as the methyl donor and reductant in the reaction, yielding dihydrofolate (DHF) as a by-product. This enzymatic reaction provides an intracellular de novo source of dTMP, an essential precursor for DNA biosynthesis. This is Thymidylate synthase from Photorhabdus laumondii subsp. laumondii (strain DSM 15139 / CIP 105565 / TT01) (Photorhabdus luminescens subsp. laumondii).